Consider the following 663-residue polypeptide: MKHLVTTALAYTNGPLHLGHARSTYIPADIYTRYLRLKGEEVIHVGGTDNHGVPITLTAEREGVKPIDIVDRYHNAIKADLDSLNVSFDTFGRTHSDIHIETAQEFYSKLKENGYIYEKEIEQFYCEKCDMYLADRYVEGICPFCEGEARGDHCEVCGRHLEPTELVNPYCIHCNSKPEIKRTTHYFFKLSAMQDVLKEYIENSPEMPEHVKNMALRWIEELHDWDVSRNIKWGVPIPGCDDQVMYVWIEAPIGYVSFTKQLGDLWKDYWLENTGDSKISHFIGKDITVHHAVFWPGILKGIGGYKMPNAVVSGGYLTLENKKMSTSKNWVVWVKDFIENFSSDYLRYFFMINAPLNRDTDFSWDDFQKRINTELIDIIGNFTHRTLVFTERKFGSTPVVDLNQLKDEDKKLISKCEDTLNRVDSLIREYNFKDALMEIIHLAKEGNGYFQGMAPWAIKDEERLKEVMYTCSVALKYIVYLLSSFMPEKTALLLEYMNEELDLEVRGNPLKKPKVIFTKVSDEDISRMKENLMKATKKAETKSDEKSKKVKSGEKMDIIDIDYFGNIDLRVGQILEVEEVPRSKKLYKITADLGDEKRQIVSGLKGAYEAEELVGKKVIIICNLKPAKLCGVESQGMLLAAEDDSIVSLLALDRDLPVGSKIH.

The 'HIGH' region motif lies at 10–20; sequence AYTNGPLHLGH. Residues Cys142, Cys145, Cys154, and Cys157 each coordinate Zn(2+). A 'KMSKS' region motif is present at residues 323-327; the sequence is KMSTS. An ATP-binding site is contributed by Thr326. The 101-residue stretch at 563-663 folds into the tRNA-binding domain; sequence YFGNIDLRVG…RDLPVGSKIH (101 aa).

This sequence belongs to the class-I aminoacyl-tRNA synthetase family. MetG type 1 subfamily. In terms of assembly, homodimer. Requires Zn(2+) as cofactor.

The protein resides in the cytoplasm. The enzyme catalyses tRNA(Met) + L-methionine + ATP = L-methionyl-tRNA(Met) + AMP + diphosphate. Its function is as follows. Is required not only for elongation of protein synthesis but also for the initiation of all mRNA translation through initiator tRNA(fMet) aminoacylation. This is Methionine--tRNA ligase from Methanococcus maripaludis (strain C5 / ATCC BAA-1333).